The sequence spans 435 residues: SVGFKAGVKDYKLTYYTPDYQTLDTDILAAFRVTPQPGVPPEEAGAAVAAESSTGTWTTVWTDGLTSLDRYKGRCYHIEPVAGEDNQYIVYVAYPLDLFEEGSVTNMFTSIVGNVFGFKALRALRLEDLRIPPAYSKTFQGPPHGIQVERDKLNKYGRPLLGCTIKPKLGLSAKNYGRAVYECLRGGLDFTKDDENVNSQPFMRWRDRFLFCAEAIFKAQAETGEIKGHYLNATAGTCEEMIKRAVFARELGVPIVMHDYLTGGFTANTSLAHYCRDNGLLLHIHRAMHAVIDRQKNHGIHFRVLAKALRLSGGDHIHSGTVVGKLEGERDITLGFVDLLRDDVIEKDRSRGIYFSQFWVSLPGVLPVASGGIHVWHMPALTEIFGDDSVLQFGGGTLGHPWGNPPGAAANRVALEACVQARNEGQDLAREGNEI.

At Lys-5 the chain carries N6,N6,N6-trimethyllysine. Asn-114 and Thr-164 together coordinate substrate. Residue Lys-166 is the Proton acceptor of the active site. Lys-168 lines the substrate pocket. Positions 192, 194, and 195 each coordinate Mg(2+). Lys-192 is modified (N6-carboxylysine). Residue His-285 is the Proton acceptor of the active site. Substrate is bound by residues Arg-286, His-318, and Ser-370.

This sequence belongs to the RuBisCO large chain family. Type I subfamily. As to quaternary structure, heterohexadecamer of 8 large chains and 8 small chains; disulfide-linked. The disulfide link is formed within the large subunit homodimers. The cofactor is Mg(2+). In terms of processing, the disulfide bond which can form in the large chain dimeric partners within the hexadecamer appears to be associated with oxidative stress and protein turnover.

It localises to the plastid. It is found in the chloroplast. It catalyses the reaction 2 (2R)-3-phosphoglycerate + 2 H(+) = D-ribulose 1,5-bisphosphate + CO2 + H2O. The catalysed reaction is D-ribulose 1,5-bisphosphate + O2 = 2-phosphoglycolate + (2R)-3-phosphoglycerate + 2 H(+). Functionally, ruBisCO catalyzes two reactions: the carboxylation of D-ribulose 1,5-bisphosphate, the primary event in carbon dioxide fixation, as well as the oxidative fragmentation of the pentose substrate in the photorespiration process. Both reactions occur simultaneously and in competition at the same active site. This is Ribulose bisphosphate carboxylase large chain from Drosera burmannii (Burmese sundew).